The following is a 57-amino-acid chain: Small hydrophobic protein (57 aa).

The Virion surface portion of the chain corresponds to 1–8 (MPAIQPPL). A helical membrane pass occupies residues 9-29 (YLTFLLLTLLYLIITLYVWTI). The Intravirion portion of the chain corresponds to 30–57 (LTINHNTAVRYAALYQRSFSRWGFDQSL).

Belongs to the rubulavirus small hydrophobic protein family. Interacts with host TNFRSF1A, RIPK1 and IRAK1; these interactions interfere with host NF-kappa-B activation at the level of receptor complexes. Interacts with host protein UBQLN4.

It is found in the virion membrane. Its subcellular location is the host cell membrane. In terms of biological role, plays a role in the inhibition of the host NF-kappa-B pathway. This inhibition occurs at the receptor level, by preventing the signaling of TNFR1 as well as IL-1R and TLR3. In Mumps virus genotype A (strain Jeryl-Lynn) (MuV), this protein is Small hydrophobic protein (SH).